Reading from the N-terminus, the 164-residue chain is Phosphopantetheine adenylyltransferase (164 aa).

Ser10 is a substrate binding site. ATP is bound by residues 10–11 (SF) and His18. Substrate contacts are provided by Lys42, Leu74, and Arg88. ATP contacts are provided by residues 89 to 91 (GLR), Glu99, and 124 to 130 (YSFLSSS).

It belongs to the bacterial CoaD family. In terms of assembly, homohexamer. Mg(2+) serves as cofactor.

The protein resides in the cytoplasm. It carries out the reaction (R)-4'-phosphopantetheine + ATP + H(+) = 3'-dephospho-CoA + diphosphate. Its pathway is cofactor biosynthesis; coenzyme A biosynthesis; CoA from (R)-pantothenate: step 4/5. In terms of biological role, reversibly transfers an adenylyl group from ATP to 4'-phosphopantetheine, yielding dephospho-CoA (dPCoA) and pyrophosphate. The chain is Phosphopantetheine adenylyltransferase from Exiguobacterium sp. (strain ATCC BAA-1283 / AT1b).